The primary structure comprises 121 residues: MARIAGINIPPQQHAEIGLTAIFGIGRTRARKICEAAGVPVTKKVKDLTDAELERIREHIGVFAVEGDLRREVQLSIKRLIDLGTYRGMRHKRGLPVRGQRTRTNARTRKGPRRAAASLKK.

The tract at residues 92 to 121 (KRGLPVRGQRTRTNARTRKGPRRAAASLKK) is disordered.

The protein belongs to the universal ribosomal protein uS13 family. As to quaternary structure, part of the 30S ribosomal subunit. Forms a loose heterodimer with protein S19. Forms two bridges to the 50S subunit in the 70S ribosome.

Functionally, located at the top of the head of the 30S subunit, it contacts several helices of the 16S rRNA. In the 70S ribosome it contacts the 23S rRNA (bridge B1a) and protein L5 of the 50S subunit (bridge B1b), connecting the 2 subunits; these bridges are implicated in subunit movement. Contacts the tRNAs in the A and P-sites. The polypeptide is Small ribosomal subunit protein uS13 (Bordetella bronchiseptica (strain ATCC BAA-588 / NCTC 13252 / RB50) (Alcaligenes bronchisepticus)).